Here is a 186-residue protein sequence, read N- to C-terminus: Cell division protein ZapC (186 aa).

This sequence belongs to the ZapC family. In terms of assembly, interacts directly with FtsZ.

The protein resides in the cytoplasm. In terms of biological role, contributes to the efficiency of the cell division process by stabilizing the polymeric form of the cell division protein FtsZ. Acts by promoting interactions between FtsZ protofilaments and suppressing the GTPase activity of FtsZ. This is Cell division protein ZapC from Musicola paradisiaca (strain Ech703) (Dickeya paradisiaca).